The sequence spans 204 residues: Lymphotoxin-alpha (204 aa).

Residues methionine 1 to glycine 33 form the signal peptide. Residues proline 62–leucine 204 form the THD domain. Asparagine 95 carries N-linked (GlcNAc...) asparagine glycosylation. A disulfide bridge connects residues cysteine 119 and cysteine 155.

The protein belongs to the tumor necrosis factor family. As to quaternary structure, homotrimer, and heterotrimer of either two LTB and one LTA subunits or (less prevalent) two LTA and one LTB subunits. Interacts with TNFRSF14.

The protein resides in the secreted. Its subcellular location is the membrane. Its function is as follows. Cytokine that in its homotrimeric form binds to TNFRSF1A/TNFR1, TNFRSF1B/TNFBR and TNFRSF14/HVEM. In its heterotrimeric form with LTB binds to TNFRSF3/LTBR. Lymphotoxin is produced by lymphocytes and is cytotoxic for a wide range of tumor cells in vitro and in vivo. This chain is Lymphotoxin-alpha (LTA), found in Canis lupus familiaris (Dog).